A 168-amino-acid polypeptide reads, in one-letter code: Protein GrpE (168 aa).

It belongs to the GrpE family. In terms of assembly, homodimer.

The protein localises to the cytoplasm. Participates actively in the response to hyperosmotic and heat shock by preventing the aggregation of stress-denatured proteins, in association with DnaK and GrpE. It is the nucleotide exchange factor for DnaK and may function as a thermosensor. Unfolded proteins bind initially to DnaJ; upon interaction with the DnaJ-bound protein, DnaK hydrolyzes its bound ATP, resulting in the formation of a stable complex. GrpE releases ADP from DnaK; ATP binding to DnaK triggers the release of the substrate protein, thus completing the reaction cycle. Several rounds of ATP-dependent interactions between DnaJ, DnaK and GrpE are required for fully efficient folding. The sequence is that of Protein GrpE from Thermotoga neapolitana (strain ATCC 49049 / DSM 4359 / NBRC 107923 / NS-E).